We begin with the raw amino-acid sequence, 141 residues long: Endoribonuclease YbeY (141 aa).

Residues His100, His104, and His110 each coordinate Zn(2+).

This sequence belongs to the endoribonuclease YbeY family. Zn(2+) serves as cofactor.

It localises to the cytoplasm. Functionally, single strand-specific metallo-endoribonuclease involved in late-stage 70S ribosome quality control and in maturation of the 3' terminus of the 16S rRNA. This Helicobacter pylori (strain J99 / ATCC 700824) (Campylobacter pylori J99) protein is Endoribonuclease YbeY.